The sequence spans 437 residues: Glutamate-1-semialdehyde 2,1-aminomutase (437 aa).

The residue at position 274 (Lys-274) is an N6-(pyridoxal phosphate)lysine.

Belongs to the class-III pyridoxal-phosphate-dependent aminotransferase family. HemL subfamily. As to quaternary structure, homodimer. It depends on pyridoxal 5'-phosphate as a cofactor.

Its subcellular location is the cytoplasm. It carries out the reaction (S)-4-amino-5-oxopentanoate = 5-aminolevulinate. Its pathway is porphyrin-containing compound metabolism; protoporphyrin-IX biosynthesis; 5-aminolevulinate from L-glutamyl-tRNA(Glu): step 2/2. This Verminephrobacter eiseniae (strain EF01-2) protein is Glutamate-1-semialdehyde 2,1-aminomutase.